A 101-amino-acid chain; its full sequence is MASTSKPAASTTAIKKYYFYVLLCADQTLYGGFTDNLQRRLATHNAGKGAKYTRVRSRRPLQLIYHETFTDKSSALKAEYAFKHQSRAAKLKYLSAHDVKI.

One can recognise a GIY-YIG domain in the interval 15–92 (KKYYFYVLLC…KHQSRAAKLK (78 aa)).

Belongs to the UPF0213 family.

The chain is UPF0213 protein lp_2058 from Lactiplantibacillus plantarum (strain ATCC BAA-793 / NCIMB 8826 / WCFS1) (Lactobacillus plantarum).